Reading from the N-terminus, the 335-residue chain is Flagellar P-ring protein (335 aa).

The N-terminal stretch at 1–24 (MNKITNFLILSAVLFFSLIESANA) is a signal peptide.

The protein belongs to the FlgI family. As to quaternary structure, the basal body constitutes a major portion of the flagellar organelle and consists of four rings (L,P,S, and M) mounted on a central rod.

Its subcellular location is the periplasm. It is found in the bacterial flagellum basal body. In terms of biological role, assembles around the rod to form the L-ring and probably protects the motor/basal body from shearing forces during rotation. In Bdellovibrio bacteriovorus (strain ATCC 15356 / DSM 50701 / NCIMB 9529 / HD100), this protein is Flagellar P-ring protein.